We begin with the raw amino-acid sequence, 190 residues long: CASP-like protein 1E1 (190 aa).

The disordered stretch occupies residues 1 to 23 (MEHESKNKVDGMEMEKGKKESGS). At 1–28 (MEHESKNKVDGMEMEKGKKESGSRKGLE) the chain is on the cytoplasmic side. Residues 29–49 (LTMRVLALVLTMVAATVLGVA) form a helical membrane-spanning segment. Over 50 to 83 (KQTKVVPIKLIPTLPPLNVSTTAKASYLSAFVYN) the chain is Extracellular. A glycan (N-linked (GlcNAc...) asparagine) is linked at Asn-67. The helical transmembrane segment at 84–104 (ISANAIACGYTAISIVIVMIS) threads the bilayer. Over 105-111 (KGKRSKS) the chain is Cytoplasmic. The chain crosses the membrane as a helical span at residues 112-132 (LLMAVLIGDLMMVALLFSSTG). Topologically, residues 133–163 (AAGAIGLMGRHGNKHVMWKKVCGVFGKFCNQ) are extracellular. The chain crosses the membrane as a helical span at residues 164 to 184 (AAVSVAITLIASVVFMLLVVL). Residues 185–190 (DALKLP) are Cytoplasmic-facing.

The protein belongs to the Casparian strip membrane proteins (CASP) family. As to quaternary structure, homodimer and heterodimers.

It localises to the cell membrane. The protein is CASP-like protein 1E1 of Arabidopsis thaliana (Mouse-ear cress).